Here is a 531-residue protein sequence, read N- to C-terminus: Importin subunit alpha-3 (531 aa).

The region spanning 1 to 58 is the IBB domain; sequence MSLRPSAKTEVRRNRYKVAVDAEEGRRRREDNLVEIRKNKREENLQKKRFTSSMAFGS. ARM repeat units follow at residues 111–153, 154–198, 199–236, 237–281, 282–321, 322–364, 365–405, and 406–447; these read INEV…TSEN, TNVI…CRDL, VLSY…RGKP, PPAF…DKIQ, AVIE…DDLQ, TQMV…NADQ, IQAV…GGTH, and DQIK…VVGE. Positions 500 to 524 are disordered; it reads DNEEEGNDENHAPQSGFQFGSTNVP. Residues 511–524 show a composition bias toward polar residues; that stretch reads APQSGFQFGSTNVP.

This sequence belongs to the importin alpha family. As to quaternary structure, forms a complex with importin subunit beta-1. Interacts with PRL1. Interacts with A.tumefaciens VirD2 and VirE2.

It localises to the nucleus. Its function is as follows. Binds to conventional NLS motifs and mediates nuclear protein import across the nuclear envelope. Acts as a cellular receptor for the nuclear import of the virD2 protein of Agrobacterium, but is not essential for Agrobacterium-mediated root transformation. May be involved in the regulation of pathogen-induced salicylic acid accumulation. The protein is Importin subunit alpha-3 of Arabidopsis thaliana (Mouse-ear cress).